The primary structure comprises 328 residues: Acetyl-coenzyme A carboxylase carboxyl transferase subunit alpha (328 aa).

In terms of domain architecture, CoA carboxyltransferase C-terminal spans 42–296; that stretch reads SFKEQLSILK…KESLISELHF (255 aa).

The protein belongs to the AccA family. In terms of assembly, acetyl-CoA carboxylase is a heterohexamer composed of biotin carboxyl carrier protein (accB), biotin carboxylase (accC) and two subunits each of ACCase subunit alpha (accA) and ACCase subunit beta (accD).

It localises to the plastid. It is found in the chloroplast. It catalyses the reaction N(6)-carboxybiotinyl-L-lysyl-[protein] + acetyl-CoA = N(6)-biotinyl-L-lysyl-[protein] + malonyl-CoA. The protein operates within lipid metabolism; malonyl-CoA biosynthesis; malonyl-CoA from acetyl-CoA: step 1/1. Its function is as follows. Component of the acetyl coenzyme A carboxylase (ACC) complex. First, biotin carboxylase catalyzes the carboxylation of biotin on its carrier protein (BCCP) and then the CO(2) group is transferred by the carboxyltransferase to acetyl-CoA to form malonyl-CoA. The polypeptide is Acetyl-coenzyme A carboxylase carboxyl transferase subunit alpha (Gracilaria tenuistipitata var. liui (Red alga)).